Reading from the N-terminus, the 618-residue chain is DNA ligase 2 (618 aa).

The segment covering 197–208 has biased composition (basic and acidic residues); the sequence is DKKTLESREDAK. The segment at 197–250 is disordered; the sequence is DKKTLESREDAKSVPPASQPEITNKISGDTSPNTSESVQTKKSDPDTSSNVDPS. A compositionally biased stretch (polar residues) spans 216–234; the sequence is PEITNKISGDTSPNTSESV. Glu312 contributes to the ATP binding site. Residue Lys314 is the N6-AMP-lysine intermediate of the active site. Positions 319, 334, 363, 403, 476, and 482 each coordinate ATP. Residues 459–480 form a disordered region; sequence HEGVMLKDPDSTYNPGSRGQHW.

It belongs to the ATP-dependent DNA ligase family. Mg(2+) serves as cofactor.

The catalysed reaction is ATP + (deoxyribonucleotide)n-3'-hydroxyl + 5'-phospho-(deoxyribonucleotide)m = (deoxyribonucleotide)n+m + AMP + diphosphate.. Its function is as follows. DNA ligase that seals nicks in double-stranded DNA during DNA replication, DNA recombination and DNA repair. This chain is DNA ligase 2, found in Haloquadratum walsbyi (strain DSM 16790 / HBSQ001).